The chain runs to 423 residues: Sulfate adenylyltransferase (423 aa).

This sequence belongs to the sulfate adenylyltransferase family.

It catalyses the reaction sulfate + ATP + H(+) = adenosine 5'-phosphosulfate + diphosphate. The protein operates within sulfur metabolism; hydrogen sulfide biosynthesis; sulfite from sulfate: step 1/3. This Desulfovibrio desulfuricans (strain ATCC 27774 / DSM 6949 / MB) protein is Sulfate adenylyltransferase.